Reading from the N-terminus, the 344-residue chain is uncharacterized protein (344 aa).

This is an uncharacterized protein from Aquifex aeolicus (strain VF5).